A 263-amino-acid chain; its full sequence is Ribosomal RNA small subunit methyltransferase A (263 aa).

S-adenosyl-L-methionine contacts are provided by Asn20, Leu22, Gly47, Glu68, Asp90, and Asn111.

The protein belongs to the class I-like SAM-binding methyltransferase superfamily. rRNA adenine N(6)-methyltransferase family. RsmA subfamily.

It is found in the cytoplasm. The catalysed reaction is adenosine(1518)/adenosine(1519) in 16S rRNA + 4 S-adenosyl-L-methionine = N(6)-dimethyladenosine(1518)/N(6)-dimethyladenosine(1519) in 16S rRNA + 4 S-adenosyl-L-homocysteine + 4 H(+). Functionally, specifically dimethylates two adjacent adenosines (A1518 and A1519) in the loop of a conserved hairpin near the 3'-end of 16S rRNA in the 30S particle. May play a critical role in biogenesis of 30S subunits. This chain is Ribosomal RNA small subunit methyltransferase A, found in Chlorobium chlorochromatii (strain CaD3).